The chain runs to 274 residues: 2-dehydro-3-deoxyphosphooctonate aldolase (274 aa).

Belongs to the KdsA family.

It is found in the cytoplasm. The catalysed reaction is D-arabinose 5-phosphate + phosphoenolpyruvate + H2O = 3-deoxy-alpha-D-manno-2-octulosonate-8-phosphate + phosphate. Its pathway is carbohydrate biosynthesis; 3-deoxy-D-manno-octulosonate biosynthesis; 3-deoxy-D-manno-octulosonate from D-ribulose 5-phosphate: step 2/3. The protein operates within bacterial outer membrane biogenesis; lipopolysaccharide biosynthesis. This is 2-dehydro-3-deoxyphosphooctonate aldolase from Rickettsia bellii (strain OSU 85-389).